A 199-amino-acid chain; its full sequence is MTTLTAQQIACVYAWLAQLFSRELDDEQLTQIASAQMAEWFSLLKNEPPLTAAVNELENRIATLTVRDDARLELAADFCGLFLMTDKQAALPYASAYKQDEQEIKRLLVEAGMETSGNFNEPADHLAIYLELLSHLHFSLGEGTVPARRIDSLRQKTLTALWQWLPEFVARCRQYDSFGFYAALSQLLLVLVECDHQNR.

This sequence belongs to the TorD/DmsD family. TorD subfamily.

It is found in the cytoplasm. Its function is as follows. Involved in the biogenesis of TorA. Acts on TorA before the insertion of the molybdenum cofactor and, as a result, probably favors a conformation of the apoenzyme that is competent for acquiring the cofactor. This chain is Chaperone protein TorD, found in Escherichia coli (strain K12 / MC4100 / BW2952).